The primary structure comprises 280 residues: Undecaprenyl-diphosphatase (280 aa).

The next 8 membrane-spanning stretches (helical) occupy residues 19-39 (FLPVSSTGHLFLFSSFFPFSG), 44-64 (FDDLFDIFIQSGAILSVLFLY), 89-109 (FYFLVQIVIGAFPILVVGFIA), 125-145 (ILASAWIFGGVLILIAEWFFQ), 156-176 (VGFRDAILIGIFQCVALIPGV), 197-217 (AEFSFFLAVPVLLAAGIYKLI), 226-246 (VTIPILAFGFLISFLLCTLVI), and 259-279 (GVFGIYRILLGVGVLVFTKFI).

Belongs to the UppP family.

Its subcellular location is the cell inner membrane. The catalysed reaction is di-trans,octa-cis-undecaprenyl diphosphate + H2O = di-trans,octa-cis-undecaprenyl phosphate + phosphate + H(+). In terms of biological role, catalyzes the dephosphorylation of undecaprenyl diphosphate (UPP). Confers resistance to bacitracin. The sequence is that of Undecaprenyl-diphosphatase from Leptospira borgpetersenii serovar Hardjo-bovis (strain L550).